The chain runs to 540 residues: MAKEIKFSEDARQSMLRGVDQLANAVKVTIGPKGRNVVLDKEYGAPLITNDGVTIAKEIELEDPYENMGAKLVQEVANKTNEIAGDGTTTATVLAQAMIQEGLKNVTSGANPVGLRKGIDKAVTEAVKSLHEQSQKVENKNEIAQVGAISAADEEIGQYISEAMDKVGNDGVISIEESNGFNTELEVVEGMQFDRGYQSPYMVTDSEKMEADLERPYILVTDKKISSFQDILPLLEQIVQSNRPILIIADEVEGDALTNIVLNRMRGTFTAVAVKAPGFGDRRKSMLEDIAILTGAQFITDDLGYDLKDATVDMLGTANKVEVTKDNTTIVNGDGDKNSIDARVTQLKSQIEETNSDFDREKLQERLAKLTGGVAVIKVGAASETELKERKLRIEDALNSTRAAVGEGIVAGGGTALVNVYKQVSEIEAEGDVETGINIVLKALEAPVRQIAENAGLEGSIIVEKLKHAEPGIGYNAATDEWVNMLDAGIVDPTKVTRSALQNAASVAAMFLTTEAVVAKLPEENNDAGGPAMGGMSGMM.

ATP is bound by residues 29 to 32 (TIGP), 86 to 90 (DGTTT), Gly-413, 476 to 478 (NAA), and Asp-492.

It belongs to the chaperonin (HSP60) family. As to quaternary structure, forms a cylinder of 14 subunits composed of two heptameric rings stacked back-to-back. Interacts with the co-chaperonin GroES.

Its subcellular location is the cytoplasm. It carries out the reaction ATP + H2O + a folded polypeptide = ADP + phosphate + an unfolded polypeptide.. Functionally, together with its co-chaperonin GroES, plays an essential role in assisting protein folding. The GroEL-GroES system forms a nano-cage that allows encapsulation of the non-native substrate proteins and provides a physical environment optimized to promote and accelerate protein folding. The polypeptide is Chaperonin GroEL (Staphylococcus carnosus (strain TM300)).